The following is a 1005-amino-acid chain: MVKVDLESKRYGEKLKEVFLMLDNNVVECIKEITESSRNGKLVFFVGAGVSTLSDYPQWWRLVDKYHEELYGSPKKGNYSSDEYLRIPQIFYNVKGEMAFDGILKDFFQVDKPTNPIHDKILAMNPAHVITTNYDNLIDTACWKRGKYFSVISAEEDVANATSSRYLLKVHGDFRKGFKGENVVLKEDDYLNYDQNYPLISNLMKTIIATHTIVFIGYGLGDYNINMLLNWVRKLQKDSFHKPFFIRTDPSPIENETLIYYENKGLRIIDAASLIDSNEYDYLERYSAVMDLLIESQENKFITKDDEVIDYIYGKISPLFALQYIRKIDLKHVFEYDYHFEVNGTVVRHKNKGFGYMERFFELKESCDERSKLSKKQYERFNALFNFFEKNGVICMAKDAGTLNTSIEINSLAYHGKYDVMKKFIEEQSVSIEDDYKKAFFLACLGRWEESYDLYSNIILNSIDESNGCVYYLSQINRYRIYQSITQAVTQFNGLGLLTFGRHYKPFTDEFLARIEREMTNFNIDDLFNGMPFEFQKKYKILEFLSDNQFLYDDTVKLFELTNKVRSEMSEGSYSFGMSSDIVVLLRLYDNLRFLYENCLWSVSFHEFHQYIRNSMSLLIEKAEYERTRDIDELGFSFFGKKSGFFMEYYDFVNISRHFKIDDIKNLERSCSIDKIRFGEQEKIEEYLVGIAEEITKQFSANGMNVVFYTQFISEAKAALYFAKYVKLSEEGLGKIVKALLFYFPERDLDIGKRYVWLERLTKCNELPKSIISIIDDFLVLQAEKHIDQNYSEVSSNGLYSRDYGALIKHFEKNFISKRLSEITLCLTQDKQKQIDFLFKLLPLLSTNAKSHLLSFKSVENINDLMNGIRIGLIDEFTPEHEELIIEYLETRKVNYIVEKEKGIQTFSSNDYMSTFGIWYFLEEINNSKMEEFIGMDDQYDFFVDPENFDYKKFIPSWLKNYNDKLLGKIAGNKHMKHHVIEVLKERVKNSNDKRYLEILMNYFI.

The SIR2 stretch occupies residues 1–295 (MVKVDLESKR…YSAVMDLLIE (295 aa)). The segment at 56–111 (YPQWWRLVDKYHEELYGSPKKGNYSSDEYLRIPQIFYNVKGEMAFDGILKDFFQVD) is inter-dimer interaction. Catalysis depends on residues tyrosine 134, aspartate 135, and histidine 171. The tract at residues 296–548 (SQENKFITKD…YKILEFLSDN (253 aa)) is MID. The interval 549–1005 (QFLYDDTVKL…YLEILMNYFI (457 aa)) is CTD.

As to quaternary structure, homotetramer (dimer of dimers). Homodimer. The SIR2 domains are arranged in a central core, adopting a head-to-head arrangement, while the CTDs are positioned at the periphery of the complex. Tetramerization is necessary for the activation of NADase activity. The NADase enzymatic activity of this homotetrameric form is autoinhibited. The activated form of DSR2 (after binding to the phage tube protein) exists as tetramers and dimers, with the tetramers exhibiting more NADase activity. Each tetramer binds 4 NAD(+) molecules. In terms of assembly, (Microbial infection) Interacts (via C-terminus) with phage SPR tail tube monomer protein (via N-terminus) in a 4:4 DSR2-Tube assembly; this interaction induces a conformation change of the tube protein and activates the NADase activity of DSR2. (Microbial infection) Interacts (via C-terminus) with phage SPbeta DSAD1 in a 4:2 ratio; this interaction prevents activation of the NADase defense activity of DSR2.

It catalyses the reaction NAD(+) + H2O = ADP-D-ribose + nicotinamide + H(+). With respect to regulation, (Microbial infection) NADase activity is activated through the binding of SPR phage tail tube monomer protein. NADase activity is inhibited through the binding to the phage SPbeta DSR anti-defense 1 (DSAD1). Functionally, anti-phage defense protein that is activated through the binding to the phage tail tube protein monomer and which hydrolyzes NAD+ upon activation (NADase activity). The resulting depletion of NAD(+) leads to an abortive infection. This Bacillus subtilis protein is Defense-associated sirtuin 2.